Here is a 275-residue protein sequence, read N- to C-terminus: Putative rhamnulose-1-phosphate aldolase (275 aa).

The active site involves E117. 3 residues coordinate Zn(2+): H141, H143, and H212.

Belongs to the aldolase class II family. RhaD subfamily. As to quaternary structure, homotetramer. It depends on Zn(2+) as a cofactor.

Its subcellular location is the cytoplasm. The enzyme catalyses L-rhamnulose 1-phosphate = (S)-lactaldehyde + dihydroxyacetone phosphate. It functions in the pathway carbohydrate degradation; L-rhamnose degradation; glycerone phosphate from L-rhamnose: step 3/3. Its function is as follows. Catalyzes the reversible cleavage of L-rhamnulose-1-phosphate to dihydroxyacetone phosphate (DHAP) and L-lactaldehyde. The polypeptide is Putative rhamnulose-1-phosphate aldolase (Salmonella typhi).